We begin with the raw amino-acid sequence, 146 residues long: Probable U6 snRNA-associated Sm-like protein LSm4 (146 aa).

Residues Leu-2–Val-75 form the Sm domain. Positions Gln-80 to Pro-91 are enriched in basic and acidic residues. Residues Gln-80 to Gly-146 form a disordered region. A compositionally biased stretch (gly residues) spans Gly-137–Gly-146.

Belongs to the snRNP Sm proteins family. LSm subunits form a heteromer with a doughnut shape.

Its subcellular location is the nucleus. In terms of biological role, binds specifically to the 3'-terminal U-tract of U6 snRNA. This is Probable U6 snRNA-associated Sm-like protein LSm4 from Nicotiana tabacum (Common tobacco).